The chain runs to 225 residues: E3 ubiquitin-protein ligase ATL59 (225 aa).

Residues 22–42 traverse the membrane as a helical segment; it reads FTFIVCVPICVILIVLLVLYI. An RING-type; atypical zinc finger spans residues 97–139; sequence CSVCLGDYQAEEKLQQMPSCGHTFHMECIDLWLTSHTTCPLCR.

The protein belongs to the RING-type zinc finger family. ATL subfamily.

It localises to the membrane. It catalyses the reaction S-ubiquitinyl-[E2 ubiquitin-conjugating enzyme]-L-cysteine + [acceptor protein]-L-lysine = [E2 ubiquitin-conjugating enzyme]-L-cysteine + N(6)-ubiquitinyl-[acceptor protein]-L-lysine.. It functions in the pathway protein modification; protein ubiquitination. E3 ubiquitin-protein ligase able to catalyze polyubiquitination with ubiquitin-conjugating enzyme E2 UBC8, UBC10, UBC11, and UBC34 in vitro. This chain is E3 ubiquitin-protein ligase ATL59 (ATL59), found in Arabidopsis thaliana (Mouse-ear cress).